The chain runs to 222 residues: Phosphoribosylformylglycinamidine synthase subunit PurQ (222 aa).

The Glutamine amidotransferase type-1 domain maps to 3–222 (SAVVLLPGLN…LFEGALGIAA (220 aa)). The active-site Nucleophile is C86. Residues H196 and E198 contribute to the active site.

As to quaternary structure, part of the FGAM synthase complex composed of 1 PurL, 1 PurQ and 2 PurS subunits.

The protein localises to the cytoplasm. It carries out the reaction N(2)-formyl-N(1)-(5-phospho-beta-D-ribosyl)glycinamide + L-glutamine + ATP + H2O = 2-formamido-N(1)-(5-O-phospho-beta-D-ribosyl)acetamidine + L-glutamate + ADP + phosphate + H(+). The catalysed reaction is L-glutamine + H2O = L-glutamate + NH4(+). It functions in the pathway purine metabolism; IMP biosynthesis via de novo pathway; 5-amino-1-(5-phospho-D-ribosyl)imidazole from N(2)-formyl-N(1)-(5-phospho-D-ribosyl)glycinamide: step 1/2. Part of the phosphoribosylformylglycinamidine synthase complex involved in the purines biosynthetic pathway. Catalyzes the ATP-dependent conversion of formylglycinamide ribonucleotide (FGAR) and glutamine to yield formylglycinamidine ribonucleotide (FGAM) and glutamate. The FGAM synthase complex is composed of three subunits. PurQ produces an ammonia molecule by converting glutamine to glutamate. PurL transfers the ammonia molecule to FGAR to form FGAM in an ATP-dependent manner. PurS interacts with PurQ and PurL and is thought to assist in the transfer of the ammonia molecule from PurQ to PurL. In Mesorhizobium japonicum (strain LMG 29417 / CECT 9101 / MAFF 303099) (Mesorhizobium loti (strain MAFF 303099)), this protein is Phosphoribosylformylglycinamidine synthase subunit PurQ.